We begin with the raw amino-acid sequence, 881 residues long: Alanine--tRNA ligase (881 aa).

Zn(2+) contacts are provided by histidine 568, histidine 572, cysteine 670, and histidine 674.

Belongs to the class-II aminoacyl-tRNA synthetase family. Zn(2+) serves as cofactor.

The protein resides in the cytoplasm. The catalysed reaction is tRNA(Ala) + L-alanine + ATP = L-alanyl-tRNA(Ala) + AMP + diphosphate. Its function is as follows. Catalyzes the attachment of alanine to tRNA(Ala) in a two-step reaction: alanine is first activated by ATP to form Ala-AMP and then transferred to the acceptor end of tRNA(Ala). Also edits incorrectly charged Ser-tRNA(Ala) and Gly-tRNA(Ala) via its editing domain. This is Alanine--tRNA ligase from Clostridium acetobutylicum (strain ATCC 824 / DSM 792 / JCM 1419 / IAM 19013 / LMG 5710 / NBRC 13948 / NRRL B-527 / VKM B-1787 / 2291 / W).